A 363-amino-acid chain; its full sequence is Phospho-N-acetylmuramoyl-pentapeptide-transferase (363 aa).

A run of 10 helical transmembrane segments spans residues glutamine 3–isoleucine 23, glycine 48–alanine 68, proline 83–leucine 103, alanine 121–alanine 141, phenylalanine 159–methionine 179, leucine 192–phenylalanine 212, proline 234–tryptophan 254, isoleucine 261–cysteine 281, leucine 286–valine 306, and phenylalanine 340–alanine 360.

It belongs to the glycosyltransferase 4 family. MraY subfamily. Mg(2+) serves as cofactor.

It is found in the cell membrane. The catalysed reaction is UDP-N-acetyl-alpha-D-muramoyl-L-alanyl-gamma-D-glutamyl-meso-2,6-diaminopimeloyl-D-alanyl-D-alanine + di-trans,octa-cis-undecaprenyl phosphate = di-trans,octa-cis-undecaprenyl diphospho-N-acetyl-alpha-D-muramoyl-L-alanyl-D-glutamyl-meso-2,6-diaminopimeloyl-D-alanyl-D-alanine + UMP. Its pathway is cell wall biogenesis; peptidoglycan biosynthesis. In terms of biological role, catalyzes the initial step of the lipid cycle reactions in the biosynthesis of the cell wall peptidoglycan: transfers peptidoglycan precursor phospho-MurNAc-pentapeptide from UDP-MurNAc-pentapeptide onto the lipid carrier undecaprenyl phosphate, yielding undecaprenyl-pyrophosphoryl-MurNAc-pentapeptide, known as lipid I. The protein is Phospho-N-acetylmuramoyl-pentapeptide-transferase of Streptomyces coelicolor (strain ATCC BAA-471 / A3(2) / M145).